Consider the following 176-residue polypeptide: uncharacterized protein (176 aa).

The protein belongs to the mimivirus R160 family.

This is an uncharacterized protein from Acanthamoeba polyphaga mimivirus (APMV).